The following is a 1189-amino-acid chain: Increased DNA methylation 1 (1189 aa).

Disordered stretches follow at residues 475-498 and 523-597; these read KNLH…HDSL and SRDE…CRLL. Residues 523-532 show a composition bias toward basic and acidic residues; the sequence is SRDERLRNEK. 2 stretches are compositionally biased toward basic residues: residues 541–550 and 565–590; these read KKGRKKARKH and NKGK…KRNN. The PHD-type 1 zinc finger occupies 726 to 771; that stretch reads DDSCGVCGDGGELICCDNCPSTFHQACLSMQVLPEGSWYCSSCTCW. The segment at 767–823 adopts a PHD-type 2; degenerate zinc-finger fold; sequence SCTCWICSELVSDNAERSQDFKCSQCAHKYHGTCLQGISKRRKLFPETYFCGKNCEK. The N-acetyltransferase domain maps to 879 to 1024; it reads MEESFLSMVD…GTTLLKKTLY (146 aa). The interval 1031–1157 is disordered; sequence TMKGVCLSKE…SSSSAALEEV (127 aa). Basic and acidic residues-rich tracts occupy residues 1038 to 1050, 1102 to 1114, and 1129 to 1145; these read SKER…KEAD, NPSR…DRPN, and CLQK…KETT. Positions 1147–1157 are enriched in low complexity; it reads ASSSSAALEEV.

As to quaternary structure, interacts (via N-terminus) with IDM2. Interacts with IMD3. Part of a complex made of MBD7, IDM1, IDM2 and IDM3. As to expression, expressed in cotyledons and hypocotyls in young seedlings.

The protein resides in the nucleus. Its function is as follows. Histone H3 acetyltransferase that binds methylated DNA at chromatin sites lacking histone H3K4 di- or trimethylation and catalyzes H3K18 and H3K23 acetylation. Prevents the transcriptional silencing of transgenes and of some endogenous genes. Requires the presence of IDM2 for efficient H3K18 acetylation, but not for H3K23 acetylation. This chain is Increased DNA methylation 1, found in Arabidopsis thaliana (Mouse-ear cress).